A 436-amino-acid chain; its full sequence is UDP-N-acetylmuramate--L-alanine ligase (436 aa).

108–114 (GAHGKTS) is a binding site for ATP.

The protein belongs to the MurCDEF family.

Its subcellular location is the cytoplasm. It catalyses the reaction UDP-N-acetyl-alpha-D-muramate + L-alanine + ATP = UDP-N-acetyl-alpha-D-muramoyl-L-alanine + ADP + phosphate + H(+). Its pathway is cell wall biogenesis; peptidoglycan biosynthesis. Functionally, cell wall formation. The chain is UDP-N-acetylmuramate--L-alanine ligase from Bacillus cereus (strain B4264).